The primary structure comprises 685 residues: Coiled-coil domain-containing protein 8 homolog (685 aa).

Residues 93–127 (VGTYDSSNGSDSELSDFDTSKVKGNRSSSGRTRKV) form a disordered region. Phosphoserine is present on residues S142 and S146. 4 disordered regions span residues 207 to 263 (QRVK…GTRR), 281 to 538 (VPPF…KAEA), 558 to 579 (QRAE…TGAT), and 599 to 623 (REEA…KQVK). Polar residues predominate over residues 219-228 (EVGQTQQAST). Residues 246–256 (DSSRNTGDRSD) show a composition bias toward basic and acidic residues. Low complexity-rich tracts occupy residues 299-329 (AENQ…PRAE), 337-353 (EAVA…PRAE), 361-401 (EAAA…PRAE), and 409-420 (EAAASPIAEAAA). Over residues 425–440 (ELVDSPRAETAADPRA) the composition is skewed to basic and acidic residues. Residues 458-468 (AAASPIAEAAA) are compositionally biased toward low complexity. Over residues 473-488 (ELVDSPRAETAADPRA) the composition is skewed to basic and acidic residues. Over residues 505–519 (EVAASPRAEAAASPR) the composition is skewed to low complexity. Over residues 558-567 (QRAEAIDSQR) the composition is skewed to basic and acidic residues. Positions 611–622 (SAGSGSRAQKQV) are enriched in polar residues. Residues 647-653 (PRLPTLP) carry the PxLPxI/L motif; mediates interaction with ANKRA2 motif.

As to quaternary structure, component of the 3M complex, composed of core components CUL7, CCDC8 and OBSL1. Interacts (via PxLPxI/L motif) with ANKRA2 (via ankyrin repeats); may link the 3M complex to histone deacetylases including HDAC4 and HDAC5.

The protein localises to the cytoplasm. It is found in the cytoskeleton. Its subcellular location is the microtubule organizing center. The protein resides in the centrosome. Functionally, core component of the 3M complex, a complex required to regulate microtubule dynamics and genome integrity. It is unclear how the 3M complex regulates microtubules, it could act by controlling the level of a microtubule stabilizer. Required for localization of CUL7 to the centrosome. The chain is Coiled-coil domain-containing protein 8 homolog (Ccdc8) from Mus musculus (Mouse).